A 967-amino-acid chain; its full sequence is E3 ubiquitin-protein ligase arkadia-C (967 aa).

Disordered stretches follow at residues Q57 to L175 and R193 to M276. Residues S112–D131 are compositionally biased toward low complexity. A compositionally biased stretch (polar residues) spans G149–R160. The segment covering S232–T251 has biased composition (low complexity). The SUMO interaction motif 1 (SIM) signature appears at V280–E284. Residues E305–V311 carry the SUMO interaction motif 2 (SIM) motif. The segment at L321 to R343 is disordered. The SUMO interaction motif 3 (SIM) motif lies at V360–T364. Disordered stretches follow at residues D368–L452, H482–N548, L629–V657, and P669–A689. Positions V385–S395 are enriched in low complexity. The segment covering H482–S498 has biased composition (basic residues). Residues L629–A642 show a composition bias toward polar residues. Residues S643 to M654 show a composition bias toward pro residues. Residues Y880–H882 form a ubiquitin binding region. Residues C915 and C918 each coordinate Zn(2+). The RING-type; atypical zinc finger occupies C915–R956. A ubiquitin binding region spans residues R930 to M934. 2 residues coordinate Zn(2+): H938 and C941.

This sequence belongs to the Arkadia family. As to quaternary structure, monomer.

The protein localises to the nucleus. It localises to the cytoplasm. Its subcellular location is the PML body. It catalyses the reaction S-ubiquitinyl-[E2 ubiquitin-conjugating enzyme]-L-cysteine + [acceptor protein]-L-lysine = [E2 ubiquitin-conjugating enzyme]-L-cysteine + N(6)-ubiquitinyl-[acceptor protein]-L-lysine.. It functions in the pathway protein modification; protein ubiquitination. With respect to regulation, binds free ubiquitin non-covalently via its RING-type zinc finger. Ubiquitin-binding leads to enhance the E3 ubiquitin-protein ligase activity by stabilizing the ubiquitin-conjugating enzyme E2 (donor ubiquitin) in the 'closed' conformation and activating ubiquitin transfer. Its function is as follows. E3 ubiquitin-protein ligase required for mesoderm patterning during embryonic development. Acts as an enhancer of the transcriptional responses of the smad2/smad3 effectors, which are activated downstream of BMP. Acts by mediating ubiquitination and degradation of SMAD inhibitors such as smad7, inducing their proteasomal degradation and thereby enhancing the transcriptional activity of TGF-beta and BMP. Specifically binds polysumoylated chains via SUMO interaction motifs (SIMs) and mediates ubiquitination of sumoylated substrates. The regulation of the BMP-SMAD signaling is however independent of sumoylation and is not dependent of SUMO interaction motifs (SIMs). The polypeptide is E3 ubiquitin-protein ligase arkadia-C (rnf111-c) (Xenopus laevis (African clawed frog)).